An 86-amino-acid chain; its full sequence is UPF0297 protein SAHV_1604 (86 aa).

Belongs to the UPF0297 family.

In Staphylococcus aureus (strain Mu3 / ATCC 700698), this protein is UPF0297 protein SAHV_1604.